Consider the following 450-residue polypeptide: Chromosomal replication initiator protein DnaA (450 aa).

Positions 1 to 76 are domain I, interacts with DnaA modulators; the sequence is MNLNDILKEL…KKILKQPVNI (76 aa). The interval 76 to 107 is domain II; the sequence is ISFTYEQEYQKQLEKTESINKDHSDIISKKNK. The domain III, AAA+ region stretch occupies residues 108 to 327; it reads KVNENTFENF…GSVSRLNFWS (220 aa). ATP-binding residues include Gly-151, Gly-153, Lys-154, and Thr-155. The segment at 328-450 is domain IV, binds dsDNA; sequence QQNPEEKVIT…DILKNKILTK (123 aa).

Belongs to the DnaA family. Oligomerizes as a right-handed, spiral filament on DNA at oriC.

It localises to the cytoplasm. The protein resides in the cell membrane. In terms of biological role, plays an essential role in the initiation and regulation of chromosomal replication. ATP-DnaA binds to the origin of replication (oriC) to initiate formation of the DNA replication initiation complex once per cell cycle. Binds the DnaA box (a 9 base pair repeat at the origin) and separates the double-stranded (ds)DNA. Forms a right-handed helical filament on oriC DNA; dsDNA binds to the exterior of the filament while single-stranded (ss)DNA is stabiized in the filament's interior. The ATP-DnaA-oriC complex binds and stabilizes one strand of the AT-rich DNA unwinding element (DUE), permitting loading of DNA polymerase. After initiation quickly degrades to an ADP-DnaA complex that is not apt for DNA replication. Binds acidic phospholipids. This is Chromosomal replication initiator protein DnaA from Mycoplasma capricolum subsp. capricolum (strain California kid / ATCC 27343 / NCTC 10154).